A 101-amino-acid chain; its full sequence is MPRKKLVGTVVSNKMDKTVVVRVERTFAHPLYKKTVKRAKKYHAHDEDNSCGIGDIVEIEECRPLSKTKKFKVVRIVKKSVFGEEKLETPENVEMLGGEEK.

Belongs to the universal ribosomal protein uS17 family. Part of the 30S ribosomal subunit.

Functionally, one of the primary rRNA binding proteins, it binds specifically to the 5'-end of 16S ribosomal RNA. This is Small ribosomal subunit protein uS17 from Kosmotoga olearia (strain ATCC BAA-1733 / DSM 21960 / TBF 19.5.1).